The sequence spans 388 residues: Formate-dependent phosphoribosylglycinamide formyltransferase (388 aa).

Residues 20–21 and E80 contribute to the N(1)-(5-phospho-beta-D-ribosyl)glycinamide site; that span reads EL. Residues R112, K153, 158 to 163, 193 to 196, and E201 contribute to the ATP site; these read SSGKGQ and EEFV. An ATP-grasp domain is found at 117–306; it reads RLASEKLGLR…EFEIHVRSIL (190 aa). 2 residues coordinate Mg(2+): E265 and E277. N(1)-(5-phospho-beta-D-ribosyl)glycinamide is bound by residues D284, K352, and 359-360; that span reads RR.

The protein belongs to the PurK/PurT family. Homodimer.

The enzyme catalyses N(1)-(5-phospho-beta-D-ribosyl)glycinamide + formate + ATP = N(2)-formyl-N(1)-(5-phospho-beta-D-ribosyl)glycinamide + ADP + phosphate + H(+). It functions in the pathway purine metabolism; IMP biosynthesis via de novo pathway; N(2)-formyl-N(1)-(5-phospho-D-ribosyl)glycinamide from N(1)-(5-phospho-D-ribosyl)glycinamide (formate route): step 1/1. In terms of biological role, involved in the de novo purine biosynthesis. Catalyzes the transfer of formate to 5-phospho-ribosyl-glycinamide (GAR), producing 5-phospho-ribosyl-N-formylglycinamide (FGAR). Formate is provided by PurU via hydrolysis of 10-formyl-tetrahydrofolate. The protein is Formate-dependent phosphoribosylglycinamide formyltransferase of Methanococcus vannielii (strain ATCC 35089 / DSM 1224 / JCM 13029 / OCM 148 / SB).